Consider the following 145-residue polypeptide: L-alanine exporter AlaE (145 aa).

4 helical membrane-spanning segments follow: residues 16-36, 42-62, 86-106, and 111-131; these read FALVVYCFIIGMAIEIMLSGM, LSSRLLSIPVNIAIAWPYGLY, LFAYVSFQSPVYAAILWVIGA, and ILTAVTSNLVISMVMGVTYGY.

The protein belongs to the AlaE exporter family.

It is found in the cell inner membrane. Its function is as follows. Exports L-alanine. The sequence is that of L-alanine exporter AlaE from Pectobacterium parmentieri (strain WPP163) (Pectobacterium wasabiae (strain WPP163)).